Here is a 425-residue protein sequence, read N- to C-terminus: ATP-dependent RNA helicase RhlB (425 aa).

Positions 9–37 (TRFADLALHPKIQQAISSAGFEYCTPIQA) match the Q motif motif. The Helicase ATP-binding domain occupies 40 to 218 (LPVALSNRDV…YEHMNAPTKL (179 aa)). Position 53–60 (53–60 (AQTGTGKT)) interacts with ATP. A DEAD box motif is present at residues 164–167 (DEAD). The 148-residue stretch at 242–389 (KFPLLLTLIE…VTKYDGDALL (148 aa)) folds into the Helicase C-terminal domain. The interval 391-425 (DLRRPRPIQRRRRHNSGGGKGKPRGRRSGPPRNAS) is disordered. The segment covering 395–419 (PRPIQRRRRHNSGGGKGKPRGRRSG) has biased composition (basic residues).

Belongs to the DEAD box helicase family. RhlB subfamily. Component of the RNA degradosome, which is a multiprotein complex involved in RNA processing and mRNA degradation.

The protein resides in the cytoplasm. It carries out the reaction ATP + H2O = ADP + phosphate + H(+). DEAD-box RNA helicase involved in RNA degradation. Has RNA-dependent ATPase activity and unwinds double-stranded RNA. This chain is ATP-dependent RNA helicase RhlB, found in Idiomarina loihiensis (strain ATCC BAA-735 / DSM 15497 / L2-TR).